We begin with the raw amino-acid sequence, 373 residues long: Probable G-protein coupled receptor 173 (373 aa).

Over 1-26 the chain is Extracellular; the sequence is MANTTGEPEEVSGALSPPSAVAYVKL. Asn3 carries N-linked (GlcNAc...) asparagine glycosylation. The helical transmembrane segment at 27 to 47 threads the bilayer; that stretch reads VLLGLIMCVSLAGNAILSLLV. The Cytoplasmic portion of the chain corresponds to 48–59; that stretch reads LKDRALHKAPYY. A helical membrane pass occupies residues 60-80; that stretch reads FLLDLCLADGIRSAVCFPFVL. Over 81 to 97 the chain is Extracellular; it reads ASVRHGSSWTFSALSCK. Cys96 and Cys174 are disulfide-bonded. The helical transmembrane segment at 98 to 118 threads the bilayer; it reads IVAFMAVLFCFHAAFMLFCIS. At 119–139 the chain is on the cytoplasmic side; the sequence is VTRYMAIAHHRFYAKRMTLWT. Residues 140 to 160 form a helical membrane-spanning segment; the sequence is CAAVICMAWTLSVAMAFPPVF. Over 161–188 the chain is Extracellular; sequence DVGTYKFIREEDQCIFEHRYFKANDTLG. The N-linked (GlcNAc...) asparagine glycan is linked to Asn184. The helical transmembrane segment at 189–209 threads the bilayer; the sequence is FMLMLAVLMAATHAVYGKLLL. At 210–287 the chain is on the cytoplasmic side; the sequence is FEYRHRKMKP…VKGEKQLGRM (78 aa). A helical transmembrane segment spans residues 288–308; it reads FYAITLLFLLLWSPYIVACYW. Residues 309-322 lie on the Extracellular side of the membrane; it reads RVFVKACAVPHRYL. A helical membrane pass occupies residues 323 to 343; sequence ATAVWMSFAQAAVNPIVCFLL. Residues 344 to 373 are Cytoplasmic-facing; it reads NKDLKKCLRTHAPCWGTGGAPAPREPYCVM.

Belongs to the G-protein coupled receptor 1 family.

The protein localises to the cell membrane. In terms of biological role, is a receptor for the SMIM20 derived peptides Phoenixin-14 and Phoenixin-20. It mediates the Phoenixin-14 and Phoenixin-20 augmentation of gonadotropin-releasing hormone (GNRH) signaling in the hypothalamus and pituitary gland. In the ovary, it mediates the effects of Phoenixin-14 and Phoenixin-20 induced granulosa cell proliferation during follicular growth. This Bos taurus (Bovine) protein is Probable G-protein coupled receptor 173 (GPR173).